An 88-amino-acid polypeptide reads, in one-letter code: Large ribosomal subunit protein bL27 (88 aa).

Over residues 1–13 (MATKKSGGSSSNG) the composition is skewed to low complexity. Residues 1-24 (MATKKSGGSSSNGRDSRGRRLGVK) form a disordered region.

It belongs to the bacterial ribosomal protein bL27 family.

The protein is Large ribosomal subunit protein bL27 of Ehrlichia ruminantium (strain Gardel).